We begin with the raw amino-acid sequence, 442 residues long: tRNA modification GTPase MnmE (442 aa).

Arg-21, Glu-79, and Lys-118 together coordinate (6S)-5-formyl-5,6,7,8-tetrahydrofolate. Positions 214–367 (GFKIAIVGKP…LKEELQNYLN (154 aa)) constitute a TrmE-type G domain. Residue Asn-224 coordinates K(+). Residues 224–229 (NVGKSS), 243–249 (SDIAGTT), and 268–271 (DTAG) contribute to the GTP site. Ser-228 is a binding site for Mg(2+). K(+)-binding residues include Ser-243, Ile-245, and Thr-248. Thr-249 provides a ligand contact to Mg(2+). Residue Lys-442 coordinates (6S)-5-formyl-5,6,7,8-tetrahydrofolate.

Belongs to the TRAFAC class TrmE-Era-EngA-EngB-Septin-like GTPase superfamily. TrmE GTPase family. In terms of assembly, homodimer. Heterotetramer of two MnmE and two MnmG subunits. Requires K(+) as cofactor.

The protein resides in the cytoplasm. In terms of biological role, exhibits a very high intrinsic GTPase hydrolysis rate. Involved in the addition of a carboxymethylaminomethyl (cmnm) group at the wobble position (U34) of certain tRNAs, forming tRNA-cmnm(5)s(2)U34. The protein is tRNA modification GTPase MnmE of Campylobacter jejuni (strain RM1221).